Reading from the N-terminus, the 657-residue chain is Hemocyanin A chain (657 aa).

Cys93 and Cys98 are oxidised to a cystine. A glycan (N-linked (GlcNAc...) asparagine) is linked at Asn167. Positions 194, 198, 224, 344, 348, and 384 each coordinate Cu cation. Cystine bridges form between Cys483–Cys502 and Cys562–Cys609. The interval 594–616 (EGHNGGHDYGGTHAQCGVHGEAY) is disordered.

This sequence belongs to the tyrosinase family. Hemocyanin subfamily. In terms of assembly, hexamer of a number of different chains, of which A, B, and C have been identified. As to expression, hemolymph.

The protein localises to the secreted. Its subcellular location is the extracellular space. Its function is as follows. Hemocyanins are copper-containing oxygen carriers occurring freely dissolved in the hemolymph of many mollusks and arthropods. In Panulirus interruptus (California spiny lobster), this protein is Hemocyanin A chain.